Consider the following 97-residue polypeptide: Co-chaperonin GroES (97 aa).

It belongs to the GroES chaperonin family. As to quaternary structure, heptamer of 7 subunits arranged in a ring. Interacts with the chaperonin GroEL.

It localises to the cytoplasm. In terms of biological role, together with the chaperonin GroEL, plays an essential role in assisting protein folding. The GroEL-GroES system forms a nano-cage that allows encapsulation of the non-native substrate proteins and provides a physical environment optimized to promote and accelerate protein folding. GroES binds to the apical surface of the GroEL ring, thereby capping the opening of the GroEL channel. In Tolumonas auensis (strain DSM 9187 / NBRC 110442 / TA 4), this protein is Co-chaperonin GroES.